The following is a 480-amino-acid chain: Transmembrane protein 161A (480 aa).

A signal peptide spans 1–28 (MAVLGVQLVVTLFTATLMHRLAPHCSFA). At 29 to 98 (RWLLCNGSLF…LTAVDALVLR (70 aa)) the chain is on the extracellular side. A glycan (N-linked (GlcNAc...) asparagine) is linked at asparagine 34. A helical membrane pass occupies residues 99-119 (FFLEYQWFVDFAVYSVGVYLF). At 120–134 (TEAYYFVLGPVQETN) the chain is on the cytoplasmic side. A helical membrane pass occupies residues 135–155 (IAVFWCLLTLAFSLKVFLMVT). At 156–166 (RLYFSTKEGGE) the chain is on the extracellular side. The chain crosses the membrane as a helical span at residues 167–187 (RSVCLSFAFLFLLLAMLVQVV). Residues 188-224 (REETLELGLEPGLASMTQHLEPILKKQDWDWTLPVIK) lie on the Cytoplasmic side of the membrane. A helical transmembrane segment spans residues 225-245 (LAIRLGLAVLGSLLGAFLIFP). At 246 to 263 (GLRLAQTHQDALTLSADR) the chain is on the extracellular side. The chain crosses the membrane as a helical span at residues 264 to 284 (PLLQLLLHTSFLSPLCTLWLW). Residues 285-304 (TKPVARDFLYQAPTRNMTFS) lie on the Cytoplasmic side of the membrane. Residues 305–325 (VPSEGAFDSLRLWVLVALCLL) traverse the membrane as a helical segment. The Extracellular portion of the chain corresponds to 326-370 (RLAVTRPHLQAYLCLAKARVEQLRKEAGRIEAREIQQRVVRVYCY). A helical membrane pass occupies residues 371 to 391 (VTVVSLQYLTPLILTLHCTLL). Residues 392–450 (LKTLGGYSWALSSTPPPLAPSQPSEALIPVDPAGDEAQQTAAQVAGILGGLLTPLFLRG) lie on the Cytoplasmic side of the membrane. A helical transmembrane segment spans residues 451 to 473 (MLAYIIWWTAACQLLSSLFGLYF). Residues 474–480 (HQHLAAS) lie on the Extracellular side of the membrane.

This sequence belongs to the TMEM161 family.

It localises to the membrane. Its function is as follows. May play a role in protection against oxidative stress. Overexpression leads to reduced levels of oxidant-induced DNA damage and apoptosis. This Mus musculus (Mouse) protein is Transmembrane protein 161A (Tmem161a).